A 267-amino-acid chain; its full sequence is Glutamate 5-kinase (267 aa).

Lysine 15 provides a ligand contact to ATP. The substrate site is built by serine 55, aspartate 142, and asparagine 158. ATP-binding positions include 178–179 and 220–226; these read SD and TGGMATK.

It belongs to the glutamate 5-kinase family.

The protein localises to the cytoplasm. The catalysed reaction is L-glutamate + ATP = L-glutamyl 5-phosphate + ADP. Its pathway is amino-acid biosynthesis; L-proline biosynthesis; L-glutamate 5-semialdehyde from L-glutamate: step 1/2. Catalyzes the transfer of a phosphate group to glutamate to form L-glutamate 5-phosphate. In Ligilactobacillus salivarius (strain UCC118) (Lactobacillus salivarius), this protein is Glutamate 5-kinase.